A 389-amino-acid polypeptide reads, in one-letter code: MPRNDQFNNSHPLDDYIEQQQLNNLDNNSNVSLANQNTVLDDFQQQFSDKEMQKIESISQQIKPLDNDGLLSYGSHLQENMSKFSHKMLDEVQTKDIGPVGDSLNQLMTKLKAVNPDELNPEKQSKLKRFFKRTKASINEVFSRMQSVSSQIDRITIQLDRHKNNLSKDIKLLDGLYQQNKDYFDDVNLYIAAAKRRKHEIQTNDIPKLQEHANQTGNQMDIQAVADMEQFVDRLDKRIYDLQLSRQIAIQTAPQIRMIQNVNQALAEKIQSSILTSIPLWKNQMAIALTLMRQRNAVSAQRAVTDTTNDLLTQNAAMLKQNAIETATENERGIVDIETLKTTQSDIIETIEQTLQIQQNGRQKRKEAEKELVGLEDELKQHLLSMKKE.

Belongs to the TelA family.

The polypeptide is TelA-like protein SH1505 (Staphylococcus haemolyticus (strain JCSC1435)).